The primary structure comprises 236 residues: Probable transcriptional activator protein TraR (236 aa).

One can recognise an HTH luxR-type domain in the interval 169-234 (VLNPKQMLSP…QLVAIAKDRG (66 aa)). The segment at residues 193–212 (ASVTANLTGINARTVQHYLD) is a DNA-binding region (H-T-H motif).

The protein belongs to the autoinducer-regulated transcriptional regulatory protein family.

Positive regulation of conjugal transfer. TraR activates target genes in the presence of AAI and also activates traR and traI themselves. In Sinorhizobium fredii (strain NBRC 101917 / NGR234), this protein is Probable transcriptional activator protein TraR (traR).